A 1201-amino-acid chain; its full sequence is MLDVNNFEYMKIGLASPDKIRSWSHGEVKKPETINYRTLKPERDGLFCERIFGPMKDWECSCGKYKRVRYKGVVCDRCGVEVTKSKVRRERMGHIELAAPVSHIWYFKGIPSRMGLVMDMSPRALEEIIYFASYVVTEPGDTPLEKKQLLSEREYRVYREKYGKGFSAGMGAEAIKKILADIDLEKETNDLKEELKSAQGQRRTRAIRRLEVMEAFRNSGNNPSWMVLDVLPVIPPEIRPMVQLEGGRFATSDLNDLYRRVINRNNRLKRLLDLGAPNIIVQNEKRMLQEAVDALIDNGRRGRPVTGPGNRPLKSLSHMLKGKQGRFRQNLLGKRVDYSGRSVIVVGPNLKMYQCGLPKEMALELFKPFVMKELVGRGLAHNIKSAKRKIERMAPEIWDVLEEVIREHPVLLNRAPTLHRLGIQAFEPTLVEGRAIRLHPLVCTAYNADFDGDQMAVHVPLSAEAQAEARILMLAAQNILNPKDGKPVVTPSQDMVLGNYYLTLEREKAVGEGTIFKDINEAQLAYQNGYVHLHSRIAVFAGSIPNERFTDEQRNQLLITTVGKLIFNTILPKSFPYINEPTKFNLEIETPAKYFVDTTTDVRAHIAAQELIDPFKKKILGNIIAEVFKKFHITETSKMLDRMKDLGFKISTKAGMTVGIADILTLEEKHEILEKAHDTVEKITKSFRRGLITDDERYERVIAVWNAAKDEIQGKLILSLDRLNPIFMMQDSGARGNISNFTQLAGMRGLMADPSGRIVELPITSNFREGLTVLEYFISTHGARKGLTDTALKTADSGYLTRRLVDVAQDVIIREDDCGTDRGLTIKAIREGTEIIEPLEERLEGRYSRKTIRHPETKEVIARENDLITEAIATQIVDAGIEEVTIRSAFTCNTKHGVCKKCYGKNLATGTEVEVGEAVGIIAAQSIGEPGTQLTMRTFHTGGVAGDDITQGLPRIQEIFEARNPKGQAIITEVGGEVVSIEEGRDRQQEITIQGTDDRRSYNIPYTARLRVEEGTIVERGEALTEGSVDPKALIRVRDVLSVQEYLLAEVQKVYRMQGVEIGDKHVEVMVRQMLRKIRVMDTGDTNILPGTLMDIHTFTEANREAILSGSQPATGRPVLLGITKASLETDSFLSAASFQETTRVLTDAAIKGKRDELLGLKENVILGKLVPAGTGIGRYRKLKSEVIKETAEVTDEITNI.

Zn(2+) contacts are provided by Cys-60, Cys-62, Cys-75, and Cys-78. Mg(2+) is bound by residues Asp-449, Asp-451, and Asp-453. Residues Cys-818, Cys-892, Cys-899, and Cys-902 each coordinate Zn(2+).

It belongs to the RNA polymerase beta' chain family. In terms of assembly, the RNAP catalytic core consists of 2 alpha, 1 beta, 1 beta' and 1 omega subunit. When a sigma factor is associated with the core the holoenzyme is formed, which can initiate transcription. Mg(2+) serves as cofactor. It depends on Zn(2+) as a cofactor.

It catalyses the reaction RNA(n) + a ribonucleoside 5'-triphosphate = RNA(n+1) + diphosphate. DNA-dependent RNA polymerase catalyzes the transcription of DNA into RNA using the four ribonucleoside triphosphates as substrates. The sequence is that of DNA-directed RNA polymerase subunit beta' from Listeria monocytogenes serovar 1/2a (strain ATCC BAA-679 / EGD-e).